Reading from the N-terminus, the 136-residue chain is 5-hydroxyisourate hydrolase (136 aa).

A signal peptide spans 1 to 22 (MKRHILATVIASLVAAPAMALA). The substrate site is built by histidine 31, arginine 69, and tyrosine 133.

It belongs to the transthyretin family. 5-hydroxyisourate hydrolase subfamily. Homotetramer.

The protein localises to the periplasm. The enzyme catalyses 5-hydroxyisourate + H2O = 5-hydroxy-2-oxo-4-ureido-2,5-dihydro-1H-imidazole-5-carboxylate + H(+). Catalyzes the hydrolysis of 5-hydroxyisourate (HIU) to 2-oxo-4-hydroxy-4-carboxy-5-ureidoimidazoline (OHCU). This is 5-hydroxyisourate hydrolase (hiuH) from Salmonella dublin.